The chain runs to 249 residues: 5'-nucleotidase SurE (249 aa).

4 residues coordinate a divalent metal cation: D8, D9, S39, and N91.

It belongs to the SurE nucleotidase family. The cofactor is a divalent metal cation.

The protein resides in the cytoplasm. The catalysed reaction is a ribonucleoside 5'-phosphate + H2O = a ribonucleoside + phosphate. Functionally, nucleotidase that shows phosphatase activity on nucleoside 5'-monophosphates. This is 5'-nucleotidase SurE from Haemophilus influenzae (strain 86-028NP).